A 292-amino-acid polypeptide reads, in one-letter code: UPF0696 protein C11orf68 (292 aa).

The segment covering 1-11 (MAAAAAAAVAG) has biased composition (low complexity). The disordered stretch occupies residues 1–60 (MAAAAAAAVAGVGRGGGGAEPRQERSRARGWAGVERSEGRRMEPGEELEEEGSPGGREDG). Position 29 is an omega-N-methylarginine (R29). The span at 35 to 44 (ERSEGRRMEP) shows a compositional bias: basic and acidic residues.

The protein belongs to the UPF0696 family.

The sequence is that of UPF0696 protein C11orf68 (C11orf68) from Homo sapiens (Human).